A 108-amino-acid chain; its full sequence is Iron-sulfur cluster assembly protein CyaY (108 aa).

This sequence belongs to the frataxin family.

In terms of biological role, involved in iron-sulfur (Fe-S) cluster assembly. May act as a regulator of Fe-S biogenesis. The protein is Iron-sulfur cluster assembly protein CyaY of Pseudomonas aeruginosa (strain ATCC 15692 / DSM 22644 / CIP 104116 / JCM 14847 / LMG 12228 / 1C / PRS 101 / PAO1).